The primary structure comprises 228 residues: Uracil-DNA glycosylase (228 aa).

Asp-64 functions as the Proton acceptor in the catalytic mechanism.

Belongs to the uracil-DNA glycosylase (UDG) superfamily. UNG family.

The protein localises to the cytoplasm. It carries out the reaction Hydrolyzes single-stranded DNA or mismatched double-stranded DNA and polynucleotides, releasing free uracil.. Functionally, excises uracil residues from the DNA which can arise as a result of misincorporation of dUMP residues by DNA polymerase or due to deamination of cytosine. The polypeptide is Uracil-DNA glycosylase (Yersinia pseudotuberculosis serotype IB (strain PB1/+)).